A 133-amino-acid chain; its full sequence is Binder of sperm protein homolog 1 (133 aa).

The N-terminal stretch at 1 to 20 is a signal peptide; the sequence is MAQPLDFLLVSICLFHSLFS. 2 consecutive Fibronectin type-II domains span residues 40–84 and 85–133; these read TEDG…YCAL and SDYA…YCIE. Disulfide bonds link Cys-45–Cys-69, Cys-59–Cys-82, Cys-90–Cys-116, and Cys-104–Cys-131. N-linked (GlcNAc...) asparagine glycosylation is present at Asn-72.

It belongs to the seminal plasma protein family. Expressed only in the epididymis.

It localises to the secreted. Its function is as follows. Binds sperm in vitro and promotes sperm capacitation. Specifically promotes capacitation induced by high density lipoproteins (HDLs). Also binds heparin, phospholipid liposomes, and weakly to gelatin. Does not bind chondroitin sulfate B. The chain is Binder of sperm protein homolog 1 (Bsph1) from Mus musculus (Mouse).